A 514-amino-acid polypeptide reads, in one-letter code: Zinc finger and BTB domain-containing protein 2 (514 aa).

Residues 24–89 (CDCTVAIGDV…MYTGKMAPQL (66 aa)) form the BTB domain. Residues K147 and K154 each participate in a glycyl lysine isopeptide (Lys-Gly) (interchain with G-Cter in SUMO2) cross-link. The segment at 149-231 (ASAPEKLGRD…LEASSSDEQP (83 aa)) is disordered. Composition is skewed to polar residues over residues 161-200 (PQTSRISQEQVPEASQLSQLTSNLAQVNRTNMTPSDPLQT) and 222-231 (LEASSSDEQP). The C2H2-type 1 zinc finger occupies 254–276 (YACHLCGRRFTLRSSLREHLQIH). A Phosphoserine modification is found at S341. A Glycyl lysine isopeptide (Lys-Gly) (interchain with G-Cter in SUMO2) cross-link involves residue K362. A C2H2-type 2 zinc finger spans residues 363-385 (YECTICGRKFIQKSHWREHMYIH). A C2H2-type 3; atypical zinc finger spans residues 390–410 (FKCSTCDKSFCRANQAARHVC). A C2H2-type 4; atypical zinc finger spans residues 448–468 (YKCNLCDKTFSTPNEVVKHSC). Glycyl lysine isopeptide (Lys-Gly) (interchain with G-Cter in SUMO2) cross-links involve residues K465, K505, and K506.

It localises to the nucleus. In terms of biological role, may be involved in transcriptional regulation. In Homo sapiens (Human), this protein is Zinc finger and BTB domain-containing protein 2 (ZBTB2).